The chain runs to 513 residues: ATP synthase subunit alpha (513 aa).

169–176 (GDRQTGKT) contacts ATP.

This sequence belongs to the ATPase alpha/beta chains family. F-type ATPases have 2 components, CF(1) - the catalytic core - and CF(0) - the membrane proton channel. CF(1) has five subunits: alpha(3), beta(3), gamma(1), delta(1), epsilon(1). CF(0) has three main subunits: a(1), b(2) and c(9-12). The alpha and beta chains form an alternating ring which encloses part of the gamma chain. CF(1) is attached to CF(0) by a central stalk formed by the gamma and epsilon chains, while a peripheral stalk is formed by the delta and b chains.

It localises to the cell inner membrane. It carries out the reaction ATP + H2O + 4 H(+)(in) = ADP + phosphate + 5 H(+)(out). Functionally, produces ATP from ADP in the presence of a proton gradient across the membrane. The alpha chain is a regulatory subunit. In Thiobacillus denitrificans (strain ATCC 25259 / T1), this protein is ATP synthase subunit alpha.